Here is a 289-residue protein sequence, read N- to C-terminus: Homeobox protein Nkx-2.6 (289 aa).

Disordered stretches follow at residues 75–125 and 259–289; these read GSNP…PQRK and TPLA…VTAW. The segment at residues 123–182 is a DNA-binding region (homeobox); the sequence is QRKSRVLFSQAQVLALERRFKQQRYLTAPEREHLASALQLTSTQVKIWFQNRRYKSKSQR. Residues 261 to 274 are compositionally biased toward polar residues; that stretch reads LASSGFSPGGQSAA.

It belongs to the NK-2 homeobox family. As to expression, not detected in any neonate or adult tissues.

It localises to the nucleus. In terms of biological role, acts as a transcriptional activator. In conjunction with NKX2-5, may play a role in both pharyngeal and cardiac embryonic development. The protein is Homeobox protein Nkx-2.6 (Nkx2-6) of Mus musculus (Mouse).